The primary structure comprises 421 residues: Cyclin-A1 (421 aa).

Residues 1–21 (MHRQSSKSGVALPPVGQGPDA) are disordered.

This sequence belongs to the cyclin family. Cyclin AB subfamily. Interacts with INCA1 and KLHDC9. Interacts with the CDK2 and CDC2 protein kinases to form a serine/threonine kinase holoenzyme complex. The cyclin subunit imparts substrate specificity to the complex. Found in a complex with CDK2, CABLES1 and CCNE1. Post-translationally, polyubiquitinated via 'Lys-11'-linked ubiquitin by the anaphase-promoting complex (APC/C), leading to its degradation by the proteasome. Deubiquitinated and stabilized by USP37 enables entry into S phase. Ubiquitinated during the G1 phase by the SCF(FBXO31) complex, leading to its proteasomal degradation. As to expression, testis and ovaries.

It localises to the nucleus. Its subcellular location is the cytoplasm. The protein localises to the cytoskeleton. It is found in the spindle. Its function is as follows. May be involved in the control of the cell cycle at the G1/S (start) and G2/M (mitosis) transitions. May primarily function in the control of the germline meiotic cell cycle and additionally in the control of mitotic cell cycle in some somatic cells. This Mus musculus (Mouse) protein is Cyclin-A1 (Ccna1).